A 120-amino-acid chain; its full sequence is NAD(P)H-quinone oxidoreductase subunit 3, chloroplastic (120 aa).

A run of 3 helical transmembrane segments spans residues 10 to 30 (LWFF…ISEI), 64 to 84 (MFAL…PWAI), and 89 to 109 (LGIS…VGLV).

Belongs to the complex I subunit 3 family. As to quaternary structure, NDH is composed of at least 16 different subunits, 5 of which are encoded in the nucleus.

It is found in the plastid. The protein resides in the chloroplast thylakoid membrane. The catalysed reaction is a plastoquinone + NADH + (n+1) H(+)(in) = a plastoquinol + NAD(+) + n H(+)(out). It carries out the reaction a plastoquinone + NADPH + (n+1) H(+)(in) = a plastoquinol + NADP(+) + n H(+)(out). Its function is as follows. NDH shuttles electrons from NAD(P)H:plastoquinone, via FMN and iron-sulfur (Fe-S) centers, to quinones in the photosynthetic chain and possibly in a chloroplast respiratory chain. The immediate electron acceptor for the enzyme in this species is believed to be plastoquinone. Couples the redox reaction to proton translocation, and thus conserves the redox energy in a proton gradient. This Chara vulgaris (Common stonewort) protein is NAD(P)H-quinone oxidoreductase subunit 3, chloroplastic.